Consider the following 255-residue polypeptide: tRNA (guanine-N(1)-)-methyltransferase (255 aa).

Residues Gly-113 and Ile-133–Leu-138 each bind S-adenosyl-L-methionine.

The protein belongs to the RNA methyltransferase TrmD family. As to quaternary structure, homodimer.

The protein localises to the cytoplasm. It carries out the reaction guanosine(37) in tRNA + S-adenosyl-L-methionine = N(1)-methylguanosine(37) in tRNA + S-adenosyl-L-homocysteine + H(+). In terms of biological role, specifically methylates guanosine-37 in various tRNAs. This Chloroflexus aggregans (strain MD-66 / DSM 9485) protein is tRNA (guanine-N(1)-)-methyltransferase.